The chain runs to 394 residues: NAD(P)H-quinone oxidoreductase subunit H (394 aa).

This sequence belongs to the complex I 49 kDa subunit family. As to quaternary structure, NDH-1 can be composed of about 15 different subunits; different subcomplexes with different compositions have been identified which probably have different functions.

The protein resides in the cellular thylakoid membrane. It catalyses the reaction a plastoquinone + NADH + (n+1) H(+)(in) = a plastoquinol + NAD(+) + n H(+)(out). The enzyme catalyses a plastoquinone + NADPH + (n+1) H(+)(in) = a plastoquinol + NADP(+) + n H(+)(out). In terms of biological role, NDH-1 shuttles electrons from an unknown electron donor, via FMN and iron-sulfur (Fe-S) centers, to quinones in the respiratory and/or the photosynthetic chain. The immediate electron acceptor for the enzyme in this species is believed to be plastoquinone. Couples the redox reaction to proton translocation, and thus conserves the redox energy in a proton gradient. Cyanobacterial NDH-1 also plays a role in inorganic carbon-concentration. This chain is NAD(P)H-quinone oxidoreductase subunit H, found in Synechococcus sp. (strain WH7803).